A 463-amino-acid chain; its full sequence is Probable ECA polymerase (463 aa).

11 consecutive transmembrane segments (helical) span residues 6–26 (FGGL…LTWM), 39–59 (FSLL…VLVF), 65–85 (VVPV…YAIY), 112–132 (ANLT…IFFL), 154–174 (GVAL…VYFL), 180–200 (AWLM…VIVG), 201–221 (GTRA…IVRG), 222–242 (WITL…MFWL), 340–360 (LVVM…GLVI), 377–397 (YKAA…IVLT), and 408–428 (VVFF…LYWL).

Belongs to the WzyE family. Probably part of a complex composed of WzxE, WzyE and WzzE.

It is found in the cell inner membrane. It participates in bacterial outer membrane biogenesis; enterobacterial common antigen biosynthesis. In terms of biological role, probably involved in the polymerization of enterobacterial common antigen (ECA) trisaccharide repeat units. This Pectobacterium carotovorum subsp. carotovorum (strain PC1) protein is Probable ECA polymerase.